A 436-amino-acid polypeptide reads, in one-letter code: Trigger factor (436 aa).

The PPIase FKBP-type domain maps to 161–246 (EDQLNIDFVG…VNTVSEPKLP (86 aa)).

The protein belongs to the FKBP-type PPIase family. Tig subfamily.

It localises to the cytoplasm. It catalyses the reaction [protein]-peptidylproline (omega=180) = [protein]-peptidylproline (omega=0). Involved in protein export. Acts as a chaperone by maintaining the newly synthesized protein in an open conformation. Functions as a peptidyl-prolyl cis-trans isomerase. The chain is Trigger factor from Pseudomonas fluorescens (strain Pf0-1).